We begin with the raw amino-acid sequence, 84 residues long: Large ribosomal subunit protein bL27 (84 aa).

Residues 1 to 20 are disordered; the sequence is MAHKKGGGSTKNGRDSNPKY.

It belongs to the bacterial ribosomal protein bL27 family.

In Prosthecochloris vibrioformis (Chlorobium vibrioforme), this protein is Large ribosomal subunit protein bL27 (rpmA).